The chain runs to 82 residues: Putative defensin-like protein 70 (82 aa).

The first 27 residues, 1–27 (MKMESSKMLVVFTLMVLIAVSSDLVSG), serve as a signal peptide directing secretion. Cystine bridges form between cysteine 39-cysteine 80, cysteine 43-cysteine 66, cysteine 52-cysteine 78, and cysteine 56-cysteine 79.

It belongs to the DEFL family.

The protein localises to the secreted. The polypeptide is Putative defensin-like protein 70 (LCR83) (Arabidopsis thaliana (Mouse-ear cress)).